Reading from the N-terminus, the 165-residue chain is Mating factor alpha-1 (165 aa).

The segment at residues 1–19 is a signal peptide (or 20); it reads MRFPSIFTAVLFAASSALA. 4 propeptides span residues 20 to 89, 105 to 110, 126 to 131, and 147 to 152; these read APVN…EAEA, EAEAEA, and EADAEA.

In terms of biological role, the active factor is excreted into the culture medium by haploid cells of the alpha mating type and acts on cells of the opposite mating type (type A). It mediates the conjugation process between the two types by inhibiting the initiation of DNA synthesis in type a cells and synchronizing them with type alpha. This Saccharomyces cerevisiae (strain ATCC 204508 / S288c) (Baker's yeast) protein is Mating factor alpha-1 (MF(ALPHA)1).